A 699-amino-acid polypeptide reads, in one-letter code: 1,4-alpha-glucan-branching enzyme (699 aa).

Residues 59-60 and 88-90 each bind substrate; these read NE and WAP. Residue Trp104 coordinates (1,4-alpha-D-glucosyl)n. 115 to 118 contributes to the substrate binding site; that stretch reads DYGK. (1,4-alpha-D-glucosyl)n is bound at residue Lys140. Tyr170 carries the post-translational modification Phosphotyrosine. 330 to 333 contacts substrate; it reads EVLR. Residue Asp354 is the Nucleophile of the active site. The active-site Proton donor is the Glu409.

Belongs to the glycosyl hydrolase 13 family. GlgB subfamily. In terms of assembly, monomer.

The enzyme catalyses Transfers a segment of a (1-&gt;4)-alpha-D-glucan chain to a primary hydroxy group in a similar glucan chain.. The protein operates within glycan biosynthesis; glycogen biosynthesis. Glycogen-branching enzyme participates in the glycogen biosynthetic process along with glycogenin and glycogen synthase. Generates alpha-1,6-glucosidic branches from alpha-1,4-linked glucose chains, to increase solubility of the glycogen polymer. The polypeptide is 1,4-alpha-glucan-branching enzyme (GBE1) (Felis catus (Cat)).